The following is a 506-amino-acid chain: MVKKNIRADEISSIIRQQIEQYNDEVTVVNVGTVFQVGDGIARIYGLDNVMAGELLEFADGTVGLALNLETKNVGAVLMGDGLTVQEGTAVRGTGKVAQIPVGEAFLGRIVNALAEPIDGKGEIQTTETRLIESNAPGIISRRSVHEPLQTGLVAVDAMIPIGRGQRELIIGDRQTGKTAIATDTILNQKGKDVICVYVAIGQKASSIAQVVNTLTERGALDYTIIVAATADSPATLQYLAPYTGAALAEYFMYTGRHTLVIYDDLSKQAQAYRQMSLLLRRPPGREAYPGDVFYLHSRLLERAAKLSDQLGSGSMTALPIVETQEGDVSAYIPTNVISITDGQIFLSADIFNSGLRPAVNVGISVSRVGSAAQLPIMKQVAGTLKLELAQFAELEGFSQFSSDLDQASQNQLARGQRLREILKQSQASPLSVPDQVASIYAGTNGFLQKLAVNQVRDFLVGLREFLDKRKPEYLEAVNSEKKLTPKVKDILNSAISEFLDEFLAS.

172–179 (GDRQTGKT) is a binding site for ATP.

Belongs to the ATPase alpha/beta chains family. In terms of assembly, F-type ATPases have 2 components, CF(1) - the catalytic core - and CF(0) - the membrane proton channel. CF(1) has five subunits: alpha(3), beta(3), gamma(1), delta(1), epsilon(1). CF(0) has four main subunits: a, b, b' and c.

The protein resides in the plastid. It localises to the chloroplast thylakoid membrane. The enzyme catalyses ATP + H2O + 4 H(+)(in) = ADP + phosphate + 5 H(+)(out). Functionally, produces ATP from ADP in the presence of a proton gradient across the membrane. The alpha chain is a regulatory subunit. The protein is ATP synthase subunit alpha, chloroplastic of Pleurastrum terricola (Filamentous green alga).